Consider the following 460-residue polypeptide: Chromosomal replication initiator protein DnaA (460 aa).

The domain I, interacts with DnaA modulators stretch occupies residues 1–83 (MENIWLEAQT…EFHVADEKPE (83 aa)). Residues 78-121 (ADEKPEAAPEEKPEKEGKPAREKEKDKDKEKEKDREKEKDKKEL) show a composition bias toward basic and acidic residues. Residues 78 to 122 (ADEKPEAAPEEKPEKEGKPAREKEKDKDKEKEKDREKEKDKKELV) form a disordered region. Residues 83–123 (EAAPEEKPEKEGKPAREKEKDKDKEKEKDREKEKDKKELVP) form a domain II region. The interval 124 to 340 (NLNPKYTFES…GMLIRLEAFA (217 aa)) is domain III, AAA+ region. ATP is bound by residues Gly-168, Gly-170, Lys-171, and Thr-172. The domain IV, binds dsDNA stretch occupies residues 341 to 460 (SLTGQEITLS…VEDIRKKLFT (120 aa)).

The protein belongs to the DnaA family. In terms of assembly, oligomerizes as a right-handed, spiral filament on DNA at oriC.

The protein resides in the cytoplasm. In terms of biological role, plays an essential role in the initiation and regulation of chromosomal replication. ATP-DnaA binds to the origin of replication (oriC) to initiate formation of the DNA replication initiation complex once per cell cycle. Binds the DnaA box (a 9 base pair repeat at the origin) and separates the double-stranded (ds)DNA. Forms a right-handed helical filament on oriC DNA; dsDNA binds to the exterior of the filament while single-stranded (ss)DNA is stabiized in the filament's interior. The ATP-DnaA-oriC complex binds and stabilizes one strand of the AT-rich DNA unwinding element (DUE), permitting loading of DNA polymerase. After initiation quickly degrades to an ADP-DnaA complex that is not apt for DNA replication. Binds acidic phospholipids. The chain is Chromosomal replication initiator protein DnaA from Geobacter sp. (strain M21).